Reading from the N-terminus, the 241-residue chain is Major prion protein (241 aa).

Positions Met-1–Cys-15 are cleaved as a signal peptide. Positions Lys-16 to Tyr-31 are interaction with ADGRG6. An interaction with GRB2, ERI3 and SYN1 region spans residues Lys-16 to Ser-223. The segment at Arg-18 to Ser-101 is disordered. Tandem repeats lie at residues Pro-44 to Gln-52, Pro-53 to Gln-60, Pro-61 to Gln-68, Pro-69 to Gln-76, and Pro-77 to Gln-84. Positions Pro-44–Gln-84 are 5 X 8 AA tandem repeats of P-H-G-G-G-W-G-Q. A compositionally biased stretch (gly residues) spans Gln-45–Thr-88. Residues His-54, Gly-55, Gly-56, His-62, Gly-63, Gly-64, His-70, Gly-71, Gly-72, His-78, Gly-79, and Gly-80 each contribute to the Cu(2+) site. Over residues Gln-91–Ser-101 the composition is skewed to basic residues. Cys-172 and Cys-207 are oxidised to a cystine. Asn-174 and Asn-190 each carry an N-linked (GlcNAc...) asparagine glycan. Ser-223 carries the GPI-anchor amidated serine lipid modification. A propeptide spans Ser-224–Ile-241 (removed in mature form).

It belongs to the prion family. As to quaternary structure, monomer and homodimer. Has a tendency to aggregate into amyloid fibrils containing a cross-beta spine, formed by a steric zipper of superposed beta-strands. Soluble oligomers may represent an intermediate stage on the path to fibril formation. Copper binding may promote oligomerization. Interacts with GRB2, APP, ERI3/PRNPIP and SYN1. Mislocalized cytosolically exposed PrP interacts with MGRN1; this interaction alters MGRN1 subcellular location and causes lysosomal enlargement. Interacts with APP. Interacts with KIAA1191. Interacts with ADGRG6.

The protein localises to the cell membrane. Its subcellular location is the golgi apparatus. In terms of biological role, its primary physiological function is unclear. May play a role in neuronal development and synaptic plasticity. May be required for neuronal myelin sheath maintenance. May promote myelin homeostasis through acting as an agonist for ADGRG6 receptor. May play a role in iron uptake and iron homeostasis. Soluble oligomers are toxic to cultured neuroblastoma cells and induce apoptosis (in vitro). Association with GPC1 (via its heparan sulfate chains) targets PRNP to lipid rafts. Also provides Cu(2+) or Zn(2+) for the ascorbate-mediated GPC1 deaminase degradation of its heparan sulfate side chains. This Mandrillus sphinx (Mandrill) protein is Major prion protein (PRNP).